The sequence spans 190 residues: Putative 3-methyladenine DNA glycosylase (190 aa).

This sequence belongs to the DNA glycosylase MPG family.

This Chlamydia abortus (strain DSM 27085 / S26/3) (Chlamydophila abortus) protein is Putative 3-methyladenine DNA glycosylase.